The chain runs to 498 residues: Probable malate:quinone oxidoreductase 2 (498 aa).

This sequence belongs to the MQO family. Requires FAD as cofactor.

It carries out the reaction (S)-malate + a quinone = a quinol + oxaloacetate. The protein operates within carbohydrate metabolism; tricarboxylic acid cycle; oxaloacetate from (S)-malate (quinone route): step 1/1. The chain is Probable malate:quinone oxidoreductase 2 from Staphylococcus epidermidis (strain ATCC 12228 / FDA PCI 1200).